The following is a 248-amino-acid chain: 4-hydroxy-tetrahydrodipicolinate reductase (248 aa).

NAD(+)-binding positions include Asp32, 74-76 (GTT), and 99-102 (SANF). His134 serves as the catalytic Proton donor/acceptor. (S)-2,3,4,5-tetrahydrodipicolinate is bound at residue His135. Lys138 acts as the Proton donor in catalysis. (S)-2,3,4,5-tetrahydrodipicolinate is bound at residue 144–145 (GT).

This sequence belongs to the DapB family.

It localises to the cytoplasm. It catalyses the reaction (S)-2,3,4,5-tetrahydrodipicolinate + NAD(+) + H2O = (2S,4S)-4-hydroxy-2,3,4,5-tetrahydrodipicolinate + NADH + H(+). The catalysed reaction is (S)-2,3,4,5-tetrahydrodipicolinate + NADP(+) + H2O = (2S,4S)-4-hydroxy-2,3,4,5-tetrahydrodipicolinate + NADPH + H(+). The protein operates within amino-acid biosynthesis; L-lysine biosynthesis via DAP pathway; (S)-tetrahydrodipicolinate from L-aspartate: step 4/4. Its function is as follows. Catalyzes the conversion of 4-hydroxy-tetrahydrodipicolinate (HTPA) to tetrahydrodipicolinate. This is 4-hydroxy-tetrahydrodipicolinate reductase from Chlorobium limicola (strain DSM 245 / NBRC 103803 / 6330).